Here is a 162-residue protein sequence, read N- to C-terminus: uncharacterized protein (162 aa).

This is an uncharacterized protein from Homo sapiens (Human).